Consider the following 178-residue polypeptide: CDP-diacylglycerol--glycerol-3-phosphate 3-phosphatidyltransferase (178 aa).

4 helical membrane passes run 28–48 (LSSL…GFFA), 88–108 (LIFF…IFLI), 125–145 (LFVS…VNFL), and 147–167 (ILTN…WVDY).

It belongs to the CDP-alcohol phosphatidyltransferase class-I family.

The protein localises to the cell membrane. The catalysed reaction is a CDP-1,2-diacyl-sn-glycerol + sn-glycerol 3-phosphate = a 1,2-diacyl-sn-glycero-3-phospho-(1'-sn-glycero-3'-phosphate) + CMP + H(+). Its pathway is phospholipid metabolism; phosphatidylglycerol biosynthesis; phosphatidylglycerol from CDP-diacylglycerol: step 1/2. This protein catalyzes the committed step to the synthesis of the acidic phospholipids. The polypeptide is CDP-diacylglycerol--glycerol-3-phosphate 3-phosphatidyltransferase (pgsA) (Aquifex aeolicus (strain VF5)).